The primary structure comprises 268 residues: Proenkephalin-A (268 aa).

The first 24 residues, 1-24 (MARFLRLCTWLLALGSCLLATVQA), serve as a signal peptide directing secretion. 3 disulfides stabilise this stretch: C26–C48, C30–C52, and C33–C65. The segment at 163-184 (TGDNRAKDSHQQESTNNDEDMS) is disordered. Propeptides lie at residues 197-208 (SPQLEDEAKELQ) and 218-228 (VGRPEWWMDYQ). Phosphoserine is present on S252.

It belongs to the opioid neuropeptide precursor family. Post-translationally, proenkephalin-A is cleaved by CTSL to generate Met-enkephalin. Processed and degraded by ACE. In terms of processing, probably cleaved by ACE. Post-translationally, processed by ACE to generate Met-enkephalin in the nucleus accumbens of the brain. The N-terminal domain contains 6 conserved cysteines thought to be involved in disulfide bonding and/or processing. As to expression, spermatogenic and somatic cells.

The protein localises to the cytoplasmic vesicle. The protein resides in the secretory vesicle. It localises to the chromaffin granule lumen. Its subcellular location is the secreted. Functionally, neuropeptide that competes with and mimic the effects of opiate drugs. They play a role in a number of physiologic functions, including pain perception and responses to stress. Its function is as follows. Met-enkephalin-Arg-Phe neuropeptide acts as a strong ligand of Mu-type opioid receptor OPRM1. Met-enkephalin-Arg-Phe-binding to OPRM1 in the nucleus accumbens of the brain increases activation of OPRM1, leading to long-term synaptic depression of glutamate release. Increases glutamate release in the striatum and decreases GABA concentration in the striatum. In terms of biological role, increases glutamate release in the striatum. This is Proenkephalin-A (Penk) from Mus musculus (Mouse).